Here is a 154-residue protein sequence, read N- to C-terminus: Transcriptional repressor NrdR (154 aa).

Residues Cys3–Cys34 fold into a zinc finger. The ATP-cone domain maps to Pro49–Glu139.

It belongs to the NrdR family. The cofactor is Zn(2+).

Negatively regulates transcription of bacterial ribonucleotide reductase nrd genes and operons by binding to NrdR-boxes. In Pseudomonas savastanoi pv. phaseolicola (strain 1448A / Race 6) (Pseudomonas syringae pv. phaseolicola (strain 1448A / Race 6)), this protein is Transcriptional repressor NrdR.